We begin with the raw amino-acid sequence, 395 residues long: S-adenosylmethionine synthase (395 aa).

His15 lines the ATP pocket. Asp17 lines the Mg(2+) pocket. Position 43 (Glu43) interacts with K(+). Residue Gln99 participates in L-methionine binding. The interval 99–109 (QSPDIAMGVNE) is flexible loop. ATP is bound by residues 174 to 176 (DGK), 240 to 241 (RF), Asp249, 255 to 256 (RK), Ala272, and Lys276. Asp249 contributes to the L-methionine binding site. Position 280 (Lys280) interacts with L-methionine.

Belongs to the AdoMet synthase family. Homotetramer; dimer of dimers. It depends on Mg(2+) as a cofactor. Requires K(+) as cofactor.

It localises to the cytoplasm. It carries out the reaction L-methionine + ATP + H2O = S-adenosyl-L-methionine + phosphate + diphosphate. Its pathway is amino-acid biosynthesis; S-adenosyl-L-methionine biosynthesis; S-adenosyl-L-methionine from L-methionine: step 1/1. Its function is as follows. Catalyzes the formation of S-adenosylmethionine (AdoMet) from methionine and ATP. The overall synthetic reaction is composed of two sequential steps, AdoMet formation and the subsequent tripolyphosphate hydrolysis which occurs prior to release of AdoMet from the enzyme. The chain is S-adenosylmethionine synthase from Moorella thermoacetica (strain ATCC 39073 / JCM 9320).